Reading from the N-terminus, the 430-residue chain is CC-adding tRNA nucleotidyltransferase (430 aa).

Residue 33 to 36 coordinates CTP; that stretch reads GCVR. Positions 46 and 48 each coordinate Mg(2+). CTP contacts are provided by residues 108 to 109, N113, 150 to 159, and R190; these read RD and DPLRIVRAYR.

Belongs to the tRNA nucleotidyltransferase/poly(A) polymerase family. Mg(2+) serves as cofactor.

The catalysed reaction is a tRNA precursor + 2 CTP = a tRNA with a 3' CC end + 2 diphosphate. Functionally, tRNA nucleotidyltransferase involved in the synthesis of the tRNA CCA terminus. Adds the two cytidine residues to tRNA. The chain is CC-adding tRNA nucleotidyltransferase from Geobacter sulfurreducens (strain ATCC 51573 / DSM 12127 / PCA).